The chain runs to 387 residues: DNA double-strand break repair protein Mre11 (387 aa).

Mn(2+) is bound by residues D11, H13, D52, and D87. H88 functions as the Proton donor in the catalytic mechanism. Positions 159, 190, and 192 each coordinate Mn(2+).

This sequence belongs to the MRE11/RAD32 family. Homodimer. Forms a heterotetramer composed of two Mre11 subunits and two Rad50 subunits. Interacts with HerA. It depends on Mn(2+) as a cofactor.

With respect to regulation, nuclease activity is regulated by Rad50. In terms of biological role, part of the Rad50/Mre11 complex, which is involved in the early steps of DNA double-strand break (DSB) repair. The complex may facilitate opening of the processed DNA ends to aid in the recruitment of HerA and NurA. Mre11 binds to DSB ends and has both double-stranded 3'-5' exonuclease activity and single-stranded endonuclease activity. The polypeptide is DNA double-strand break repair protein Mre11 (Sulfurisphaera tokodaii (strain DSM 16993 / JCM 10545 / NBRC 100140 / 7) (Sulfolobus tokodaii)).